A 421-amino-acid polypeptide reads, in one-letter code: Serine hydroxymethyltransferase (421 aa).

Residues Leu121 and 125 to 127 (GHL) contribute to the (6S)-5,6,7,8-tetrahydrofolate site. Position 229 is an N6-(pyridoxal phosphate)lysine (Lys229).

Belongs to the SHMT family. As to quaternary structure, homodimer. Pyridoxal 5'-phosphate is required as a cofactor.

It localises to the cytoplasm. The enzyme catalyses (6R)-5,10-methylene-5,6,7,8-tetrahydrofolate + glycine + H2O = (6S)-5,6,7,8-tetrahydrofolate + L-serine. The protein operates within one-carbon metabolism; tetrahydrofolate interconversion. Its pathway is amino-acid biosynthesis; glycine biosynthesis; glycine from L-serine: step 1/1. Functionally, catalyzes the reversible interconversion of serine and glycine with tetrahydrofolate (THF) serving as the one-carbon carrier. This reaction serves as the major source of one-carbon groups required for the biosynthesis of purines, thymidylate, methionine, and other important biomolecules. Also exhibits THF-independent aldolase activity toward beta-hydroxyamino acids, producing glycine and aldehydes, via a retro-aldol mechanism. The protein is Serine hydroxymethyltransferase of Haemophilus influenzae (strain PittEE).